The chain runs to 418 residues: Light-independent protochlorophyllide reductase subunit N (418 aa).

[4Fe-4S] cluster-binding residues include cysteine 17, cysteine 42, and cysteine 103.

Belongs to the BchN/ChlN family. Protochlorophyllide reductase is composed of three subunits; ChlL, ChlN and ChlB. Forms a heterotetramer of two ChlB and two ChlN subunits. The cofactor is [4Fe-4S] cluster.

The catalysed reaction is chlorophyllide a + oxidized 2[4Fe-4S]-[ferredoxin] + 2 ADP + 2 phosphate = protochlorophyllide a + reduced 2[4Fe-4S]-[ferredoxin] + 2 ATP + 2 H2O. It participates in porphyrin-containing compound metabolism; chlorophyll biosynthesis (light-independent). Component of the dark-operative protochlorophyllide reductase (DPOR) that uses Mg-ATP and reduced ferredoxin to reduce ring D of protochlorophyllide (Pchlide) to form chlorophyllide a (Chlide). This reaction is light-independent. The NB-protein (ChlN-ChlB) is the catalytic component of the complex. The protein is Light-independent protochlorophyllide reductase subunit N of Prochlorococcus marinus (strain MIT 9515).